The primary structure comprises 294 residues: Ribosomal protein L11 methyltransferase (294 aa).

Thr144, Gly165, Asp187, and Asn229 together coordinate S-adenosyl-L-methionine.

It belongs to the methyltransferase superfamily. PrmA family.

Its subcellular location is the cytoplasm. It catalyses the reaction L-lysyl-[protein] + 3 S-adenosyl-L-methionine = N(6),N(6),N(6)-trimethyl-L-lysyl-[protein] + 3 S-adenosyl-L-homocysteine + 3 H(+). In terms of biological role, methylates ribosomal protein L11. In Cellvibrio japonicus (strain Ueda107) (Pseudomonas fluorescens subsp. cellulosa), this protein is Ribosomal protein L11 methyltransferase.